The following is an 88-amino-acid chain: Protein Aeq5-like1 (88 aa).

The N-terminal stretch at 1–20 (MKSVIAVLVLSLVLVNFTQA) is a signal peptide. Intrachain disulfides connect C29-C68, C33-C64, C40-C56, and C47-C53.

In terms of tissue distribution, is expressed in the ectodermal cells of gastrulae and planulae. Is also noticeable in the endoderm in late planulae. In the primary polyps, is expressed in both ectoderm (sensory neurons) and endoderm (ganglions). Is not expressed in nematocytes.

In terms of biological role, probable neuropeptide. This chain is Protein Aeq5-like1, found in Nematostella vectensis (Starlet sea anemone).